A 143-amino-acid polypeptide reads, in one-letter code: Mannitol-specific phosphotransferase enzyme IIA component (143 aa).

One can recognise a PTS EIIA type-2 domain in the interval 2–142; the sequence is QVLAKENIKL…EDLIAIFNEV (141 aa). Histidine 62 functions as the Tele-phosphohistidine intermediate in the catalytic mechanism. At histidine 62 the chain carries Phosphohistidine; by HPr. At serine 74 the chain carries Phosphoserine.

It localises to the cytoplasm. The phosphoenolpyruvate-dependent sugar phosphotransferase system (sugar PTS), a major carbohydrate active transport system, catalyzes the phosphorylation of incoming sugar substrates concomitantly with their translocation across the cell membrane. The enzyme II CmtAB PTS system is involved in D-mannitol transport. This Bacillus subtilis (strain 168) protein is Mannitol-specific phosphotransferase enzyme IIA component (mtlF).